The chain runs to 65 residues: Large ribosomal subunit protein bL28 (65 aa).

The interval 1 to 26 (MARRDALTGKSALSGQSRSHALNATK) is disordered. Residues 11–22 (SALSGQSRSHAL) are compositionally biased toward polar residues.

The protein belongs to the bacterial ribosomal protein bL28 family.

In Mycoplasma mycoides subsp. mycoides SC (strain CCUG 32753 / NCTC 10114 / PG1), this protein is Large ribosomal subunit protein bL28.